The sequence spans 299 residues: Ethylmalonyl-CoA decarboxylase (299 aa).

This sequence belongs to the enoyl-CoA hydratase/isomerase family.

It localises to the cytoplasm. Its subcellular location is the cytosol. It carries out the reaction (2S)-ethylmalonyl-CoA + H(+) = butanoyl-CoA + CO2. The enzyme catalyses (S)-methylmalonyl-CoA + H(+) = propanoyl-CoA + CO2. The catalysed reaction is (2R)-ethylmalonyl-CoA + H(+) = butanoyl-CoA + CO2. Decarboxylates ethylmalonyl-CoA, a potentially toxic metabolite, to form butyryl-CoA, suggesting it might be involved in metabolite proofreading. Acts preferentially on (S)-ethylmalonyl-CoA but also has some activity on the (R)-isomer. Also has methylmalonyl-CoA decarboxylase activity at lower level. The sequence is that of Ethylmalonyl-CoA decarboxylase (echdc1) from Xenopus tropicalis (Western clawed frog).